The chain runs to 209 residues: Uracil phosphoribosyltransferase (209 aa).

5-phospho-alpha-D-ribose 1-diphosphate-binding positions include Arg-79, Arg-104, and 131-139; that span reads DPMLATGHS. Uracil-binding positions include Ile-194 and 199 to 201; that span reads GDA. Asp-200 contributes to the 5-phospho-alpha-D-ribose 1-diphosphate binding site.

This sequence belongs to the UPRTase family. It depends on Mg(2+) as a cofactor.

It carries out the reaction UMP + diphosphate = 5-phospho-alpha-D-ribose 1-diphosphate + uracil. It functions in the pathway pyrimidine metabolism; UMP biosynthesis via salvage pathway; UMP from uracil: step 1/1. Its activity is regulated as follows. Allosterically activated by GTP. Its function is as follows. Catalyzes the conversion of uracil and 5-phospho-alpha-D-ribose 1-diphosphate (PRPP) to UMP and diphosphate. The polypeptide is Uracil phosphoribosyltransferase (Caulobacter vibrioides (strain ATCC 19089 / CIP 103742 / CB 15) (Caulobacter crescentus)).